Reading from the N-terminus, the 365-residue chain is Carbamoyl phosphate synthase small chain (365 aa).

CPSase regions lie at residues 1–166 and 1–169; these read MKRQ…PSPG and MKRQ…GRGH. L-glutamine is bound by residues S45, G218, and G220. In terms of domain architecture, Glutamine amidotransferase type-1 spans 170–357; sequence RVVLVDFGMK…LTMIENFKKE (188 aa). C245 functions as the Nucleophile in the catalytic mechanism. Residues L246, Q249, N287, G289, and Y290 each contribute to the L-glutamine site. Residues H330 and E332 contribute to the active site.

The protein belongs to the CarA family. In terms of assembly, composed of two chains; the small (or glutamine) chain promotes the hydrolysis of glutamine to ammonia, which is used by the large (or ammonia) chain to synthesize carbamoyl phosphate. Tetramer of heterodimers (alpha,beta)4.

The enzyme catalyses hydrogencarbonate + L-glutamine + 2 ATP + H2O = carbamoyl phosphate + L-glutamate + 2 ADP + phosphate + 2 H(+). It catalyses the reaction L-glutamine + H2O = L-glutamate + NH4(+). The protein operates within amino-acid biosynthesis; L-arginine biosynthesis; carbamoyl phosphate from bicarbonate: step 1/1. It participates in pyrimidine metabolism; UMP biosynthesis via de novo pathway; (S)-dihydroorotate from bicarbonate: step 1/3. Its function is as follows. Small subunit of the glutamine-dependent carbamoyl phosphate synthetase (CPSase). CPSase catalyzes the formation of carbamoyl phosphate from the ammonia moiety of glutamine, carbonate, and phosphate donated by ATP, constituting the first step of 2 biosynthetic pathways, one leading to arginine and/or urea and the other to pyrimidine nucleotides. The small subunit (glutamine amidotransferase) binds and cleaves glutamine to supply the large subunit with the substrate ammonia. The sequence is that of Carbamoyl phosphate synthase small chain from Bacillus cereus (strain ZK / E33L).